Reading from the N-terminus, the 168-residue chain is Large ribosomal subunit protein uL10 (168 aa).

Belongs to the universal ribosomal protein uL10 family. In terms of assembly, part of the ribosomal stalk of the 50S ribosomal subunit. The N-terminus interacts with L11 and the large rRNA to form the base of the stalk. The C-terminus forms an elongated spine to which L12 dimers bind in a sequential fashion forming a multimeric L10(L12)X complex.

Its function is as follows. Forms part of the ribosomal stalk, playing a central role in the interaction of the ribosome with GTP-bound translation factors. In Laribacter hongkongensis (strain HLHK9), this protein is Large ribosomal subunit protein uL10.